We begin with the raw amino-acid sequence, 433 residues long: MLSVIILAAGKGTRMHSSLPKTLHTICGEPMLFYILETAFSISDDVHLVLHHQQERIKEAVLERSKGVIFHTQIVEKYSGTGGAIMQEDKTPIPTKHERVLILNADMPLITKDALAPLLESQNNAIGLLHLADPKGYGRVVLENHQVKKIVEEKDANDEEKTIQSVNAGVYGFERKFLEKYLPKLHDQNAQKEYYLTDLIALGINENEKIDALFLEEECFLGVNSQTERAKAEEIMLERLRKNAMDLGVVMQLPSSIYLEKGVSFKGECVLEQGVRLIGNCLIENAHIKAYSVIEESQIVNSSVGPFAHARPKSVICNSHVGNFVETKNAKLQGAKAGHLSYLGDCEIGKNTNVGAGVITCNYDGKKKHQTIIGENVFIGSDSQLVAPINIGSNVLIGSGTTITKDIPSGSLSLSRAPQINIENGYFKFFKKP.

The pyrophosphorylase stretch occupies residues 1–226 (MLSVIILAAG…EECFLGVNSQ (226 aa)). Residues 7–10 (LAAG), Lys-21, and 80–81 (GT) contribute to the UDP-N-acetyl-alpha-D-glucosamine site. Asp-106 is a Mg(2+) binding site. UDP-N-acetyl-alpha-D-glucosamine contacts are provided by Gly-138, Glu-152, Asn-167, and Asn-224. Asn-224 is a binding site for Mg(2+). The segment at 227–247 (TERAKAEEIMLERLRKNAMDL) is linker. Positions 248-433 (GVVMQLPSSI…NGYFKFFKKP (186 aa)) are N-acetyltransferase. UDP-N-acetyl-alpha-D-glucosamine contacts are provided by Arg-311 and Lys-328. The Proton acceptor role is filled by His-339. UDP-N-acetyl-alpha-D-glucosamine is bound by residues Tyr-342 and Asn-353. Residues Ala-356, 362–363 (NY), Ser-381, Ser-399, and Arg-416 each bind acetyl-CoA.

This sequence in the N-terminal section; belongs to the N-acetylglucosamine-1-phosphate uridyltransferase family. In the C-terminal section; belongs to the transferase hexapeptide repeat family. Homotrimer. It depends on Mg(2+) as a cofactor.

It is found in the cytoplasm. It catalyses the reaction alpha-D-glucosamine 1-phosphate + acetyl-CoA = N-acetyl-alpha-D-glucosamine 1-phosphate + CoA + H(+). It carries out the reaction N-acetyl-alpha-D-glucosamine 1-phosphate + UTP + H(+) = UDP-N-acetyl-alpha-D-glucosamine + diphosphate. It functions in the pathway nucleotide-sugar biosynthesis; UDP-N-acetyl-alpha-D-glucosamine biosynthesis; N-acetyl-alpha-D-glucosamine 1-phosphate from alpha-D-glucosamine 6-phosphate (route II): step 2/2. It participates in nucleotide-sugar biosynthesis; UDP-N-acetyl-alpha-D-glucosamine biosynthesis; UDP-N-acetyl-alpha-D-glucosamine from N-acetyl-alpha-D-glucosamine 1-phosphate: step 1/1. The protein operates within bacterial outer membrane biogenesis; LPS lipid A biosynthesis. Functionally, catalyzes the last two sequential reactions in the de novo biosynthetic pathway for UDP-N-acetylglucosamine (UDP-GlcNAc). The C-terminal domain catalyzes the transfer of acetyl group from acetyl coenzyme A to glucosamine-1-phosphate (GlcN-1-P) to produce N-acetylglucosamine-1-phosphate (GlcNAc-1-P), which is converted into UDP-GlcNAc by the transfer of uridine 5-monophosphate (from uridine 5-triphosphate), a reaction catalyzed by the N-terminal domain. The sequence is that of Bifunctional protein GlmU from Helicobacter pylori (strain HPAG1).